Consider the following 277-residue polypeptide: Indole-3-glycerol phosphate synthase (277 aa).

It belongs to the TrpC family.

The catalysed reaction is 1-(2-carboxyphenylamino)-1-deoxy-D-ribulose 5-phosphate + H(+) = (1S,2R)-1-C-(indol-3-yl)glycerol 3-phosphate + CO2 + H2O. The protein operates within amino-acid biosynthesis; L-tryptophan biosynthesis; L-tryptophan from chorismate: step 4/5. The protein is Indole-3-glycerol phosphate synthase of Pseudomonas putida (strain GB-1).